The chain runs to 231 residues: Probable calcium-binding protein CML21 (231 aa).

EF-hand domains lie at 54–89 (DGLRNCKAIFQEFDEDSNGSIDHTELKNCIRKLEIS), 90–125 (FDEEEINDLFKACDINEDMGITFTEFIVLLCLVYLL), 145–180 (PTFETLVDTFVFLDENKDGYVSREEMVRAIDESGER), and 181–216 (SSGRIAMKRFEEMDWDKNGMVNFKEFLFAFTQWVGI). Residues Asp67, Asp69, Asn71, Ser73, and Glu78 each contribute to the Ca(2+) site. Ca(2+)-binding residues include Asp158, Asn160, Asp162, Tyr164, Glu169, Asp194, Asp196, Asn198, Met200, and Glu205.

In terms of biological role, potential calcium sensor. In Arabidopsis thaliana (Mouse-ear cress), this protein is Probable calcium-binding protein CML21 (CML21).